We begin with the raw amino-acid sequence, 343 residues long: Homeobox protein Hox-D13 (343 aa).

Disordered regions lie at residues Met-1 to Ser-28 and Gly-78 to Ala-115. The span at Ser-85–Ala-115 shows a compositional bias: low complexity. Residues Gly-276 to Val-335 constitute a DNA-binding region (homeobox).

It belongs to the Abd-B homeobox family.

Its subcellular location is the nucleus. In terms of biological role, sequence-specific transcription factor that binds gene promoters and activates their transcription. Part of a developmental regulatory system that provides cells with specific positional identities on the anterior-posterior axis. This chain is Homeobox protein Hox-D13 (HOXD13), found in Homo sapiens (Human).